The chain runs to 184 residues: MKLIAGLGNPGKKYERTRHNVGFMVVDELSFRHQTPWKKSKFNGMVSEINVGGEKMILVKPLTFMNASGECIRPLMDYYNIQVEDVLIVYDDLDLPVGKIRLRQKGSAGGHNGMKSIIQHIKTQEFNRIRVGVSRPLKGEVINYVLGDFPKAEQPDIIAAIQKSADAIEDFAQVPFVEVMNKYN.

Tyr14 lines the tRNA pocket. Catalysis depends on His19, which acts as the Proton acceptor. The tRNA site is built by Phe64, Asn66, and Asn112.

This sequence belongs to the PTH family. In terms of assembly, monomer.

The protein localises to the cytoplasm. The catalysed reaction is an N-acyl-L-alpha-aminoacyl-tRNA + H2O = an N-acyl-L-amino acid + a tRNA + H(+). Functionally, hydrolyzes ribosome-free peptidyl-tRNAs (with 1 or more amino acids incorporated), which drop off the ribosome during protein synthesis, or as a result of ribosome stalling. Its function is as follows. Catalyzes the release of premature peptidyl moieties from peptidyl-tRNA molecules trapped in stalled 50S ribosomal subunits, and thus maintains levels of free tRNAs and 50S ribosomes. This is Peptidyl-tRNA hydrolase from Listeria welshimeri serovar 6b (strain ATCC 35897 / DSM 20650 / CCUG 15529 / CIP 8149 / NCTC 11857 / SLCC 5334 / V8).